Reading from the N-terminus, the 141-residue chain is Hemoglobin subunit alpha-A (141 aa).

The 141-residue stretch at 1 to 141 (VLSGSDKTNV…VGNVLTAKYR (141 aa)) folds into the Globin domain. His-58 contributes to the O2 binding site. His-87 is a heme b binding site.

The protein belongs to the globin family. As to quaternary structure, heterotetramer of two alpha chains and two beta chains. As to expression, red blood cells.

Functionally, involved in oxygen transport from the lung to the various peripheral tissues. In Chroicocephalus ridibundus (Black-headed gull), this protein is Hemoglobin subunit alpha-A (HBAA).